A 176-amino-acid chain; its full sequence is Protein GrpE (176 aa).

Belongs to the GrpE family. In terms of assembly, homodimer.

It is found in the cytoplasm. Functionally, participates actively in the response to hyperosmotic and heat shock by preventing the aggregation of stress-denatured proteins, in association with DnaK and GrpE. It is the nucleotide exchange factor for DnaK and may function as a thermosensor. Unfolded proteins bind initially to DnaJ; upon interaction with the DnaJ-bound protein, DnaK hydrolyzes its bound ATP, resulting in the formation of a stable complex. GrpE releases ADP from DnaK; ATP binding to DnaK triggers the release of the substrate protein, thus completing the reaction cycle. Several rounds of ATP-dependent interactions between DnaJ, DnaK and GrpE are required for fully efficient folding. This Thermoplasma volcanium (strain ATCC 51530 / DSM 4299 / JCM 9571 / NBRC 15438 / GSS1) protein is Protein GrpE.